We begin with the raw amino-acid sequence, 114 residues long: Histone H3-6 (114 aa).

Residues 1–17 are compositionally biased toward basic residues; that stretch reads NTGGKAPRKHIAHKQAK. A disordered region spans residues 1–32; that stretch reads NTGGKAPRKHIAHKQAKKSSAAAATGGVKKPH. Over residues 18 to 28 the composition is skewed to low complexity; sequence KSSAAAATGGV.

The protein belongs to the histone H3 family. As to quaternary structure, the nucleosome is a histone octamer containing two molecules each of H2A, H2B, H3 and H4 assembled in one H3-H4 heterotetramer and two H2A-H2B heterodimers. The octamer wraps approximately 147 bp of DNA.

Its subcellular location is the nucleus. The protein localises to the chromosome. In terms of biological role, core component of nucleosome. Nucleosomes wrap and compact DNA into chromatin, limiting DNA accessibility to the cellular machineries which require DNA as a template. Histones thereby play a central role in transcription regulation, DNA repair, DNA replication and chromosomal stability. DNA accessibility is regulated via a complex set of post-translational modifications of histones, also called histone code, and nucleosome remodeling. This Stylonychia lemnae (Ciliate) protein is Histone H3-6 (H3-6).